Reading from the N-terminus, the 1176-residue chain is Surface-layer 125 kDa protein (1176 aa).

The signal sequence occupies residues 1–30 (MAKQNKGRKFFAASATAALVASAIVPVASA). 3 SLH domains span residues 31-88 (AQLN…LEAE), 89-152 (GDVN…DLSE), and 153-216 (FADA…PKVD).

The protein resides in the secreted. Its subcellular location is the cell wall. It is found in the S-layer. The S-layer is a paracrystalline mono-layered assembly of proteins which coat the surface of bacteria. This Lysinibacillus sphaericus (Bacillus sphaericus) protein is Surface-layer 125 kDa protein.